A 263-amino-acid polypeptide reads, in one-letter code: Tryptophan synthase alpha chain (263 aa).

Active-site proton acceptor residues include Glu50 and Asp61.

This sequence belongs to the TrpA family. In terms of assembly, tetramer of two alpha and two beta chains.

The catalysed reaction is (1S,2R)-1-C-(indol-3-yl)glycerol 3-phosphate + L-serine = D-glyceraldehyde 3-phosphate + L-tryptophan + H2O. It functions in the pathway amino-acid biosynthesis; L-tryptophan biosynthesis; L-tryptophan from chorismate: step 5/5. Its function is as follows. The alpha subunit is responsible for the aldol cleavage of indoleglycerol phosphate to indole and glyceraldehyde 3-phosphate. The protein is Tryptophan synthase alpha chain of Clostridium acetobutylicum (strain ATCC 824 / DSM 792 / JCM 1419 / IAM 19013 / LMG 5710 / NBRC 13948 / NRRL B-527 / VKM B-1787 / 2291 / W).